Reading from the N-terminus, the 528-residue chain is MGSKTKGCCGWLIVALVASLVATAAVVAIMKKKVGGGSGRKLKPLPVPGPPGAIDSKYGDALGVALQFFQVQKAGKLENNQIPWRGDSALDDGKPAGLDLSKGMYDAGDHIKFSFPMAFTATVLSWSILEYGDQMSATKQLDPALDALRWITDFLVNAHPSDNVFYIQVGDPDLDHNCWERPETMSEKRPLTQINTKSPGSDVAAEAAAAMASASIVFKSRDTTYSDSLLQHAQKLFTFADTYKGLASDTYPKLQNYYNSTGYQDELLWAASWLYHATGDQTYLSYVTVENGKAFADWGRPTWFSWDDKLAGTQVLLSRLNFFGSKQTSNAENMGLKMYRDTAEAVICGLLPDSPSATASRTGGGLVWISGWNSLQHATNAAFLAVVYSDYMLTSQTAAVQCSGKYYSPTDIRNFAISQANYILGDNPMKLSYLVGYGSSYPQQVHHRGASIPADAKTGCKGFQYLHSTSPNPNVAMGALVGGPFQNDTFVDSRDNAVQTESSTYNSGTLVGLLSGLVTTSSVAQSFT.

Positions 1 to 24 (MGSKTKGCCGWLIVALVASLVATA) are cleaved as a signal peptide. The Nucleophile role is filled by Asp109. A glycan (N-linked (GlcNAc...) asparagine) is linked at Asn259. His446 is a catalytic residue. Residue Asn487 is glycosylated (N-linked (GlcNAc...) asparagine). Catalysis depends on residues Asp492 and Glu501.

It belongs to the glycosyl hydrolase 9 (cellulase E) family.

Its subcellular location is the secreted. The enzyme catalyses Endohydrolysis of (1-&gt;4)-beta-D-glucosidic linkages in cellulose, lichenin and cereal beta-D-glucans.. In Oryza sativa subsp. japonica (Rice), this protein is Endoglucanase 24.